Reading from the N-terminus, the 344-residue chain is KRR1 small subunit processome component homolog (344 aa).

The KH domain maps to 126–194 (DIIKIGNLVH…VRDIVLDTMN (69 aa)). The span at 230–246 (KNKNISKRKQPKNKKPK) shows a compositional bias: basic residues. The segment at 230–326 (KNKNISKRKQ…KRAAEDNKVD (97 aa)) is disordered. A coiled-coil region spans residues 271–344 (FLNKEQKQAK…MKANKKKERS (74 aa)). A compositionally biased stretch (basic and acidic residues) spans 272–303 (LNKEQKQAKRQQERTAKQAEAAKKQDERRNKD).

It belongs to the KRR1 family. In terms of assembly, monomer. Component of the ribosomal small subunit (SSU) processome.

It is found in the nucleus. The protein resides in the nucleolus. In terms of biological role, required for 40S ribosome biogenesis. Involved in nucleolar processing of pre-18S ribosomal RNA and ribosome assembly. Binds to RNA. Required for female germline development, cell viability during eye development and for survival of dividing cells and epithelial cells during early wing disk development. This Drosophila mojavensis (Fruit fly) protein is KRR1 small subunit processome component homolog.